The sequence spans 251 residues: Hydroxyacylglutathione hydrolase (251 aa).

H53, H55, D57, H58, H110, D127, and H165 together coordinate Zn(2+).

This sequence belongs to the metallo-beta-lactamase superfamily. Glyoxalase II family. In terms of assembly, monomer. Zn(2+) serves as cofactor.

The catalysed reaction is an S-(2-hydroxyacyl)glutathione + H2O = a 2-hydroxy carboxylate + glutathione + H(+). The protein operates within secondary metabolite metabolism; methylglyoxal degradation; (R)-lactate from methylglyoxal: step 2/2. Functionally, thiolesterase that catalyzes the hydrolysis of S-D-lactoyl-glutathione to form glutathione and D-lactic acid. The protein is Hydroxyacylglutathione hydrolase of Salmonella gallinarum (strain 287/91 / NCTC 13346).